The following is a 168-amino-acid chain: Group 2 truncated hemoglobin 3-1 (168 aa).

Position 98 (H98) interacts with heme b.

This sequence belongs to the truncated hemoglobin family. Group II subfamily. In terms of assembly, homodimer when ferric. Mainly expressed in root nodules, but barely in leaves, roots, stems, flowers and fruits.

Functionally, hemoglobin-like protein that exhibits an unusual concentration-independent binding of O(2) and CO. Required for general plant development and during nodulation. May promote shoot organogenesis from root explants. This Lotus japonicus (Lotus corniculatus var. japonicus) protein is Group 2 truncated hemoglobin 3-1.